The chain runs to 305 residues: Protoheme IX farnesyltransferase 2 (305 aa).

The next 7 helical transmembrane spans lie at 38 to 58 (LITT…SFLG), 60 to 80 (LNTV…SCAV), 115 to 135 (ILLI…AAVI), 157 to 177 (INTV…WTAV), 181 to 201 (IGVV…PHFL), 236 to 256 (VACL…IVIL), and 285 to 305 (FVYS…FTLF).

Belongs to the UbiA prenyltransferase family. Protoheme IX farnesyltransferase subfamily. Interacts with CtaA.

It is found in the cell membrane. It catalyses the reaction heme b + (2E,6E)-farnesyl diphosphate + H2O = Fe(II)-heme o + diphosphate. It functions in the pathway porphyrin-containing compound metabolism; heme O biosynthesis; heme O from protoheme: step 1/1. In terms of biological role, converts heme B (protoheme IX) to heme O by substitution of the vinyl group on carbon 2 of heme B porphyrin ring with a hydroxyethyl farnesyl side group. The protein is Protoheme IX farnesyltransferase 2 of Bacillus velezensis (strain DSM 23117 / BGSC 10A6 / LMG 26770 / FZB42) (Bacillus amyloliquefaciens subsp. plantarum).